Reading from the N-terminus, the 630-residue chain is Biosynthetic arginine decarboxylase (630 aa).

Lys99 is subject to N6-(pyridoxal phosphate)lysine. 279–289 (FDVGGGLGVDY) is a binding site for substrate.

This sequence belongs to the Orn/Lys/Arg decarboxylase class-II family. SpeA subfamily. The cofactor is Mg(2+). Pyridoxal 5'-phosphate serves as cofactor.

The enzyme catalyses L-arginine + H(+) = agmatine + CO2. It functions in the pathway amine and polyamine biosynthesis; agmatine biosynthesis; agmatine from L-arginine: step 1/1. Its function is as follows. Catalyzes the biosynthesis of agmatine from arginine. The sequence is that of Biosynthetic arginine decarboxylase from Neisseria meningitidis serogroup B (strain ATCC BAA-335 / MC58).